The chain runs to 322 residues: Acetyl-coenzyme A carboxylase carboxyl transferase subunit alpha (322 aa).

One can recognise a CoA carboxyltransferase C-terminal domain in the interval 30 to 293 (ALDISAEITR…RQALQESLRK (264 aa)).

This sequence belongs to the AccA family. As to quaternary structure, acetyl-CoA carboxylase is a heterohexamer composed of biotin carboxyl carrier protein (AccB), biotin carboxylase (AccC) and two subunits each of ACCase subunit alpha (AccA) and ACCase subunit beta (AccD).

It is found in the cytoplasm. It carries out the reaction N(6)-carboxybiotinyl-L-lysyl-[protein] + acetyl-CoA = N(6)-biotinyl-L-lysyl-[protein] + malonyl-CoA. Its pathway is lipid metabolism; malonyl-CoA biosynthesis; malonyl-CoA from acetyl-CoA: step 1/1. Its function is as follows. Component of the acetyl coenzyme A carboxylase (ACC) complex. First, biotin carboxylase catalyzes the carboxylation of biotin on its carrier protein (BCCP) and then the CO(2) group is transferred by the carboxyltransferase to acetyl-CoA to form malonyl-CoA. This is Acetyl-coenzyme A carboxylase carboxyl transferase subunit alpha from Nitrosomonas eutropha (strain DSM 101675 / C91 / Nm57).